Reading from the N-terminus, the 346-residue chain is Probable WRKY transcription factor 54 (346 aa).

The interval 109-130 is disordered; it reads PVSCNGGDSGESKKKRLGVGKG. The span at 121–130 shows a compositional bias: basic residues; sequence KKKRLGVGKG. The segment at residues 146–214 is a DNA-binding region (WRKY); sequence VEAKSSEDRY…YIGYHTCTAN (69 aa). Residues 267–282 are compositionally biased toward basic and acidic residues; it reads VKEEQNNNGDQSKDYY. The segment at 267-286 is disordered; it reads VKEEQNNNGDQSKDYYEGSS.

Belongs to the WRKY group III family. Interacts with WRKY30. Binds to BZR2/BES1 to cooperatively regulate the expression of target genes. Interacts with ASK7/BIN2. In terms of processing, phosphorylated and destabilized by ASK7/BIN2. As to expression, expressed in leaves.

The protein localises to the nucleus. In terms of biological role, transcription factor. Interacts specifically with the W box (5'-(T)TGAC[CT]-3'), a frequently occurring elicitor-responsive cis-acting element. Together with WRKY70, negative regulator of developmental senescence, probably via the regulation of several senescence-associated markers genes. Positive regulator of EDS1-dependent defense against E.amylovora. In collaboration with WRKY70, prevents stomatal closure and, consequently, osmotic stress tolerance. Together with WRKY46 and WRKY70, promotes brassinosteroid (BR)-regulated plant growth but prevent drought response by modulating gene expression. Negative regulator of SA biosynthesis. Prevents defense response to the necrotrophic pathogens P.carotovorum and B.cinerea, but promotes defense against biotrophic/hemibiotrophic pathogens P.syringae pv. tomato (Pst) DC3000, probably by regulating negatively the jasmonic acid (JA)/ethylene (ET) and positively the salicylic acid (SA) signaling pathways. This chain is Probable WRKY transcription factor 54, found in Arabidopsis thaliana (Mouse-ear cress).